Here is a 526-residue protein sequence, read N- to C-terminus: MFS-type transporter clz19 (526 aa).

A disordered region spans residues 1–49; sequence MNVDTTSPQAPLAGVESKQDGASNEATAKAESTTHDQNESSSFDERPVH. Basic and acidic residues predominate over residues 32 to 49; that stretch reads STTHDQNESSSFDERPVH. A glycan (N-linked (GlcNAc...) asparagine) is linked at asparagine 38. A helical membrane pass occupies residues 59 to 79; the sequence is ALLAVASFAAAISPASTTTYY. The N-linked (GlcNAc...) asparagine glycan is linked to asparagine 97. 3 consecutive transmembrane segments (helical) span residues 126–143, 186–206, and 214–234; these read VYLVSLSINMAANLGLAL, AYLTLGLVMGPALGPLIGGLL, and AIFWFLMILGGFFFLMVLTFF. N-linked (GlcNAc...) asparagine glycosylation is found at asparagine 238 and asparagine 253. 6 helical membrane-spanning segments follow: residues 294 to 314, 322 to 342, 384 to 404, 411 to 431, 446 to 466, and 473 to 493; these read FIVCMYGALLFGGYASVISIF, YGYSQVQVGLCYLPFGVGSIL, LTVSFPMIFATCGFVVAYGWL, VASVLVVVFLIANVFTGVLIA, ALGAAMNLTRCLMGAGGVAAV, and IGIGYTATATAGVWVVTLPAL.

Belongs to the major facilitator superfamily.

The protein localises to the membrane. Functionally, MFS-type transporter; part of the gene cluster that mediates the biosynthesis of squalestatin S1 (SQS1, also known as zaragozic acid A), a heavily oxidized fungal polyketide that offers potent cholesterol lowering activity by targeting squalene synthase (SS). In Cochliobolus lunatus (Filamentous fungus), this protein is MFS-type transporter clz19.